Consider the following 166-residue polypeptide: Deoxyuridine 5'-triphosphate nucleotidohydrolase (166 aa).

The disordered stretch occupies residues 1–24; that stretch reads MACVNEPSPKLQKLDRNGIHGDSS. Residue glutamate 138 coordinates Mg(2+).

Belongs to the dUTPase family. Homotrimer. Requires Mg(2+) as cofactor.

The enzyme catalyses dUTP + H2O = dUMP + diphosphate + H(+). It participates in pyrimidine metabolism; dUMP biosynthesis; dUMP from dCTP (dUTP route): step 2/2. This enzyme is involved in nucleotide metabolism: it produces dUMP, the immediate precursor of thymidine nucleotides and it decreases the intracellular concentration of dUTP, preventing uracil incorporation into DNA. This chain is Deoxyuridine 5'-triphosphate nucleotidohydrolase (DUT), found in Arabidopsis thaliana (Mouse-ear cress).